The sequence spans 429 residues: Ribosomal RNA small subunit methyltransferase B (429 aa).

S-adenosyl-L-methionine-binding positions include 254–260 (CAAPGGK), D277, D303, and D322. Catalysis depends on C375, which acts as the Nucleophile.

This sequence belongs to the class I-like SAM-binding methyltransferase superfamily. RsmB/NOP family.

Its subcellular location is the cytoplasm. The catalysed reaction is cytidine(967) in 16S rRNA + S-adenosyl-L-methionine = 5-methylcytidine(967) in 16S rRNA + S-adenosyl-L-homocysteine + H(+). Its function is as follows. Specifically methylates the cytosine at position 967 (m5C967) of 16S rRNA. This chain is Ribosomal RNA small subunit methyltransferase B, found in Escherichia coli O17:K52:H18 (strain UMN026 / ExPEC).